The sequence spans 138 residues: Small ribosomal subunit protein bS6 (138 aa).

The segment at 94–138 (VKQDGPLPTPKPTSKEDETEKEEVKPTEDKTESPAQEEKKEDSKE) is disordered. Basic and acidic residues predominate over residues 106–138 (TSKEDETEKEEVKPTEDKTESPAQEEKKEDSKE).

This sequence belongs to the bacterial ribosomal protein bS6 family.

In terms of biological role, binds together with bS18 to 16S ribosomal RNA. The chain is Small ribosomal subunit protein bS6 from Prochlorococcus marinus (strain NATL1A).